Consider the following 175-residue polypeptide: NADH-ubiquinone oxidoreductase chain 6 (175 aa).

The next 5 helical transmembrane spans lie at 1–21, 25–45, 47–67, 88–108, and 149–169; these read MMTY…VGFA, SPIY…AIVL, FGGS…MLVV, AVLA…CYIL, and YGTW…LVIM.

This sequence belongs to the complex I subunit 6 family. In terms of assembly, core subunit of respiratory chain NADH dehydrogenase (Complex I) which is composed of 45 different subunits.

It localises to the mitochondrion inner membrane. The catalysed reaction is a ubiquinone + NADH + 5 H(+)(in) = a ubiquinol + NAD(+) + 4 H(+)(out). In terms of biological role, core subunit of the mitochondrial membrane respiratory chain NADH dehydrogenase (Complex I) which catalyzes electron transfer from NADH through the respiratory chain, using ubiquinone as an electron acceptor. Essential for the catalytic activity and assembly of complex I. In Canis lupus familiaris (Dog), this protein is NADH-ubiquinone oxidoreductase chain 6 (MT-ND6).